A 188-amino-acid chain; its full sequence is Elongation factor P (188 aa).

The protein belongs to the elongation factor P family.

Its subcellular location is the cytoplasm. It functions in the pathway protein biosynthesis; polypeptide chain elongation. Functionally, involved in peptide bond synthesis. Stimulates efficient translation and peptide-bond synthesis on native or reconstituted 70S ribosomes in vitro. Probably functions indirectly by altering the affinity of the ribosome for aminoacyl-tRNA, thus increasing their reactivity as acceptors for peptidyl transferase. This Anaplasma marginale (strain Florida) protein is Elongation factor P.